Here is a 507-residue protein sequence, read N- to C-terminus: AMP phosphorylase (507 aa).

AMP contacts are provided by residues Gly168, 194–199 (SRAITG), and Thr203. The active-site Proton donor is Asp256. AMP is bound by residues Ser264 and Lys288.

The protein belongs to the thymidine/pyrimidine-nucleoside phosphorylase family. Type 2 subfamily.

The enzyme catalyses AMP + phosphate = alpha-D-ribose 1,5-bisphosphate + adenine. It carries out the reaction CMP + phosphate = cytosine + alpha-D-ribose 1,5-bisphosphate. The catalysed reaction is UMP + phosphate = alpha-D-ribose 1,5-bisphosphate + uracil. Its function is as follows. Catalyzes the conversion of AMP and phosphate to adenine and ribose 1,5-bisphosphate (R15P). Exhibits phosphorylase activity toward CMP and UMP in addition to AMP. Functions in an archaeal AMP degradation pathway, together with R15P isomerase and RubisCO. The protein is AMP phosphorylase of Methanosarcina mazei (strain ATCC BAA-159 / DSM 3647 / Goe1 / Go1 / JCM 11833 / OCM 88) (Methanosarcina frisia).